A 309-amino-acid chain; its full sequence is Thiamine-monophosphate kinase (309 aa).

Mg(2+)-binding residues include Asp-41 and Asp-55. Residue His-62 participates in substrate binding. Residues Asp-83, Asp-128, and Asp-215 each contribute to the Mg(2+) site. Residue 127-128 (GD) coordinates ATP. Ser-217 is a binding site for ATP. Residue Asp-218 participates in Mg(2+) binding. Glu-268 lines the substrate pocket.

Belongs to the thiamine-monophosphate kinase family.

It catalyses the reaction thiamine phosphate + ATP = thiamine diphosphate + ADP. Its pathway is cofactor biosynthesis; thiamine diphosphate biosynthesis; thiamine diphosphate from thiamine phosphate: step 1/1. Catalyzes the ATP-dependent phosphorylation of thiamine-monophosphate (TMP) to form thiamine-pyrophosphate (TPP), the active form of vitamin B1. The sequence is that of Thiamine-monophosphate kinase from Methanopyrus kandleri (strain AV19 / DSM 6324 / JCM 9639 / NBRC 100938).